The chain runs to 356 residues: Red-sensitive opsin-2 (356 aa).

The Extracellular portion of the chain corresponds to 1–48 (MAEWANAAFAARRRGDETTRDNAFSYTNSNNTRDPFEGPNYHIAPRWV). N30 carries an N-linked (GlcNAc...) asparagine glycan. A helical transmembrane segment spans residues 49–73 (YNVATVWMFFVVVASTFTNGLVLVA). At 74–85 (TAKFKKLRHPLN) the chain is on the cytoplasmic side. The helical transmembrane segment at 86–111 (WILVNLAIADLGETLFASTISVINQV) threads the bilayer. Topologically, residues 112-125 (FGYFILGHPMCIFE) are extracellular. A disulfide bridge connects residues C122 and C199. A helical transmembrane segment spans residues 126–145 (GYTVSVCGIAGLWSLTVISW). Over 146-164 (ERWVVVCKPFGNVKFDGKW) the chain is Cytoplasmic. Residues 165 to 188 (ASAGIIFSWVWAAVWCAPPIFGWS) form a helical membrane-spanning segment. Over 189–214 (RYWPHGLKTSCGPDVFGGNEDPGVQS) the chain is Extracellular. A helical transmembrane segment spans residues 215–242 (YMLVLMITCCILPLAIIILCYIAVFLAI). Topologically, residues 243–264 (HAVAQQQKDSESTQKAEKEVSR) are cytoplasmic. Residues 265–288 (MVVVMILAFCLCWGPYTAFACFAA) traverse the membrane as a helical segment. Residues 289–296 (ANPGYAFH) are Extracellular-facing. Residues 297–321 (PLAAAMPAYFAKSATIYNPIIYVFM) form a helical membrane-spanning segment. Residue K308 is modified to N6-(retinylidene)lysine. The Cytoplasmic segment spans residues 322-356 (NRQFRVCIMQLFGKKVDDGSEVSTSKTEVSSVAPA).

The protein belongs to the G-protein coupled receptor 1 family. Opsin subfamily. In terms of processing, phosphorylated on some or all of the serine and threonine residues present in the C-terminal region.

The protein localises to the membrane. In terms of biological role, visual pigments are the light-absorbing molecules that mediate vision. They consist of an apoprotein, opsin, covalently linked to cis-retinal. The protein is Red-sensitive opsin-2 (opn1lw2) of Danio rerio (Zebrafish).